We begin with the raw amino-acid sequence, 2302 residues long: Phosphatidylinositol phosphatase PTPRQ (2302 aa).

An N-terminal signal peptide occupies residues 1–18 (MMDFHFSFLFLLIGTSES). Topologically, residues 19–1908 (QVDVSSSFDG…GEGLSERTVE (1890 aa)) are extracellular. The N-linked (GlcNAc...) asparagine glycan is linked to Asn-54. 17 Fibronectin type-III domains span residues 60-155 (PPVF…TAES), 159-254 (KVVN…SSST), 310-398 (PPQN…PPDV), 401-501 (AVFD…PHND), 474-566 (GFYE…TVRT), 570-665 (VPSS…TPED), 670-759 (SPQD…TSET), 764-854 (APEN…TEED), 859-948 (PPQN…TPEG), 953-1053 (PPND…TDQD), 1058-1151 (PVGN…TEED), 1156-1243 (PPII…TDES), 1248-1341 (PPQN…TQES), 1345-1431 (AVRN…LPET), 1435-1539 (APTN…TLPG), 1544-1642 (PPEN…TLES), and 1647-1748 (PPNN…IKAP). 5 N-linked (GlcNAc...) asparagine glycosylation sites follow: Asn-162, Asn-169, Asn-318, Asn-354, and Asn-389. N-linked (GlcNAc...) asparagine glycans are attached at residues Asn-733 and Asn-746. N-linked (GlcNAc...) asparagine glycans are attached at residues Asn-904, Asn-998, Asn-1010, and Asn-1040. N-linked (GlcNAc...) asparagine glycosylation is found at Asn-1251 and Asn-1256. Asn-1805 carries N-linked (GlcNAc...) asparagine glycosylation. The helical transmembrane segment at 1909-1929 (IILSVTLCILSIILLGTAIFA) threads the bilayer. Topologically, residues 1930–2302 (FVRIRQKQKE…VELEWEETTM (373 aa)) are cytoplasmic. Residues 2006 to 2262 (FQEEFSELPK…IFLHQCILDL (257 aa)) enclose the Tyrosine-protein phosphatase domain. Cys-2203 functions as the Phosphocysteine intermediate in the catalytic mechanism.

Belongs to the protein-tyrosine phosphatase family. Receptor class 2A subfamily. In terms of assembly, interacts with TPRN. TPRN, CLIC5 and PTPQR form concentric rings at the base of stereocilia and may form a complex.

Its subcellular location is the cell projection. It is found in the stereocilium. It localises to the apical cell membrane. The protein localises to the basal cell membrane. It catalyses the reaction a 1,2-diacyl-sn-glycero-3-phospho-(1D-myo-inositol-3,4,5-trisphosphate) + H2O = a 1,2-diacyl-sn-glycero-3-phospho-(1D-myo-inositol-4,5-bisphosphate) + phosphate. The enzyme catalyses a 1,2-diacyl-sn-glycero-3-phospho-(1D-myo-inositol-3,4,5-trisphosphate) + H2O = a 1,2-diacyl-sn-glycero-3-phospho-(1D-myo-inositol-3,4-bisphosphate) + phosphate. The catalysed reaction is a 1,2-diacyl-sn-glycero-3-phospho-(1D-myo-inositol-3,5-bisphosphate) + H2O = a 1,2-diacyl-sn-glycero-3-phospho-(1D-myo-inositol-5-phosphate) + phosphate. It carries out the reaction a 1,2-diacyl-sn-glycero-3-phospho-(1D-myo-inositol-3,5-bisphosphate) + H2O = a 1,2-diacyl-sn-glycero-3-phospho-(1D-myo-inositol-3-phosphate) + phosphate. It catalyses the reaction a 1,2-diacyl-sn-glycero-3-phospho-(1D-myo-inositol-4,5-bisphosphate) + H2O = a 1,2-diacyl-sn-glycero-3-phospho-(1D-myo-inositol 4-phosphate) + phosphate. Dephosphorylates phosphatidylinositol phosphates, such as phosphatidylinositol 3,4,5-trisphosphate (PIP3) and phosphatidylinositol 3,5-diphosphates, with preference for PIP3. Phosphate can be hydrolyzed from the D3 and D5 positions in the inositol ring. Has low tyrosine-protein phosphatase activity in vitro; however, the relevance of such activity in vivo is unclear. Plays an important role in adipogenesis of mesenchymal stem cells (MSCs). Regulates the phosphorylation state of AKT1 by regulating the levels of PIP3 level in MSCs and preadipocyte cells. Required for hair bundle maturation, a process that enables hair cells to detect and transmit sound and balance signals effectively, therefore affecting auditory function. May act by regulating the level of phosphatidylinositol 4,5-bisphosphate (PIP2) level in the basal region of hair bundles. The protein is Phosphatidylinositol phosphatase PTPRQ (Ptprq) of Rattus norvegicus (Rat).